Consider the following 340-residue polypeptide: Putative Ig-like domain-containing protein C1 (340 aa).

The region spanning Pro-207–Ile-294 is the Ig-like domain.

The sequence is that of Putative Ig-like domain-containing protein C1 from Sus scrofa (Pig).